Reading from the N-terminus, the 85-residue chain is UPF0386 protein Bind_1628 (85 aa).

It belongs to the UPF0386 family.

In Beijerinckia indica subsp. indica (strain ATCC 9039 / DSM 1715 / NCIMB 8712), this protein is UPF0386 protein Bind_1628.